Consider the following 27-residue polypeptide: Defensin-like protein 1 (27 aa).

Pyrrolidone carboxylic acid is present on Q1.

Belongs to the DEFL family. In terms of assembly, forms oligomers in its native state.

Possesses antifungal activity sensitive to inorganic cations. In Brassica campestris (Field mustard), this protein is Defensin-like protein 1.